The following is a 303-amino-acid chain: Ornithine carbamoyltransferase (303 aa).

Carbamoyl phosphate is bound by residues 52-55, Gln79, Arg103, and 130-133; these read STRT and HPCQ. Residues Asn161, Asp222, and 226 to 227 each bind L-ornithine; that span reads SM. Carbamoyl phosphate-binding positions include 262–263 and Arg290; that span reads CL.

It belongs to the aspartate/ornithine carbamoyltransferase superfamily. OTCase family.

Its subcellular location is the cytoplasm. The enzyme catalyses carbamoyl phosphate + L-ornithine = L-citrulline + phosphate + H(+). It participates in amino-acid biosynthesis; L-arginine biosynthesis; L-arginine from L-ornithine and carbamoyl phosphate: step 1/3. Functionally, reversibly catalyzes the transfer of the carbamoyl group from carbamoyl phosphate (CP) to the N(epsilon) atom of ornithine (ORN) to produce L-citrulline. This is Ornithine carbamoyltransferase from Geobacter sulfurreducens (strain ATCC 51573 / DSM 12127 / PCA).